A 90-amino-acid chain; its full sequence is Keratin-associated protein 19-1 (90 aa).

The interval 5–84 is 26 X 2 AA repeats of G-[YCGS]; sequence GSYYGGLGYS…CCRPSYNGGY (80 aa).

The protein belongs to the KRTAP type 19 family. In terms of assembly, interacts with hair keratins. In terms of tissue distribution, detected in the upper portion of the hair cortex.

Functionally, in the hair cortex, hair keratin intermediate filaments are embedded in an interfilamentous matrix, consisting of hair keratin-associated proteins (KRTAP), which are essential for the formation of a rigid and resistant hair shaft through their extensive disulfide bond cross-linking with abundant cysteine residues of hair keratins. The matrix proteins include the high-sulfur and high-glycine-tyrosine keratins. The protein is Keratin-associated protein 19-1 (KRTAP19-1) of Homo sapiens (Human).